A 963-amino-acid polypeptide reads, in one-letter code: Translation initiation factor IF-2 (963 aa).

The segment covering 53-77 has biased composition (basic and acidic residues); that stretch reads SHGQADDSARKKITLTKRETSEIRQ. Residues 53-377 form a disordered region; that stretch reads SHGQADDSAR…RSNFQAPTEP (325 aa). The segment covering 78–87 has biased composition (polar residues); it reads SDATGKTRTV. Composition is skewed to basic and acidic residues over residues 98–110, 123–183, 197–250, and 267–278; these read IKRD…HQAD, EEAR…KAEE, DTSR…EAEA, and PSERKAEEKKAE. Gly residues predominate over residues 343–356; it reads SSGGVGGWRGGPRG. The region spanning 463–632 is the tr-type G domain; it reads PRPPVVTVMG…SLQAEVLELK (170 aa). The tract at residues 472–479 is G1; sequence GHVDHGKT. A GTP-binding site is contributed by 472–479; that stretch reads GHVDHGKT. The tract at residues 497-501 is G2; the sequence is GITQH. The G3 stretch occupies residues 518-521; it reads DTPG. Residues 518-522 and 572-575 each bind GTP; these read DTPGH and NKVD. The interval 572 to 575 is G4; it reads NKVD. The interval 608–610 is G5; the sequence is SAK.

This sequence belongs to the TRAFAC class translation factor GTPase superfamily. Classic translation factor GTPase family. IF-2 subfamily.

It localises to the cytoplasm. Functionally, one of the essential components for the initiation of protein synthesis. Protects formylmethionyl-tRNA from spontaneous hydrolysis and promotes its binding to the 30S ribosomal subunits. Also involved in the hydrolysis of GTP during the formation of the 70S ribosomal complex. The polypeptide is Translation initiation factor IF-2 (Cupriavidus taiwanensis (strain DSM 17343 / BCRC 17206 / CCUG 44338 / CIP 107171 / LMG 19424 / R1) (Ralstonia taiwanensis (strain LMG 19424))).